Reading from the N-terminus, the 1214-residue chain is Lysine-specific demethylase 3A (1214 aa).

Phosphoserine occurs at positions 150 and 209. Over residues 194–211 the composition is skewed to polar residues; the sequence is TPSSNRQQNTPQAANSPP. Disordered stretches follow at residues 194–215, 271–293, and 310–398; these read TPSSNRQQNTPQAANSPPNIGA, PKGSCIQPKTNTDQESRLESTPQ, and KAEL…KSVL. The residue at position 330 (Ser-330) is a Phosphoserine. The segment covering 361-370 has biased composition (polar residues); that stretch reads LGSQSQNLKE. Positions 371-380 are enriched in basic and acidic residues; sequence TSVKVDHDSC. Over residues 381–391 the composition is skewed to polar residues; sequence CTRSSNKTQTP. A C6-type zinc finger spans residues 546–571; the sequence is CDVCDTTIFNLHWVCPRCGFGVCVDC. Residues 769–773 carry the LXXLL motif motif; it reads LRNLL. The residue at position 779 (Lys-779) is an N6-acetyllysine. In terms of domain architecture, JmjC spans 944–1167; the sequence is MPSRFDDLMA…HCFWLTQEFR (224 aa). Fe cation-binding residues include His-1006, Asp-1008, and His-1135.

Belongs to the JHDM2 histone demethylase family. In terms of assembly, interacts with VRK1. It depends on Fe(2+) as a cofactor. As to expression, testis specific. Expressed only in male germ cells.

The protein localises to the cytoplasm. Its subcellular location is the nucleus. The catalysed reaction is N(6),N(6)-dimethyl-L-lysyl(9)-[histone H3] + 2 2-oxoglutarate + 2 O2 = L-lysyl(9)-[histone H3] + 2 formaldehyde + 2 succinate + 2 CO2. Histone demethylase that specifically demethylates 'Lys-9' of histone H3, thereby playing a central role in histone code. Preferentially demethylates mono- and dimethylated H3 'Lys-9' residue, with a preference for dimethylated residue, while it has weak or no activity on trimethylated H3 'Lys-9'. Demethylation of Lys residue generates formaldehyde and succinate. Involved in hormone-dependent transcriptional activation, by participating in recruitment to androgen-receptor target genes, resulting in H3 'Lys-9' demethylation and transcriptional activation. Involved in spermatogenesis by regulating expression of target genes such as PRM1 and TNP1 which are required for packaging and condensation of sperm chromatin. Directly regulates expression of PPARA and UCP1 and is involved in obesity resistance. In Rattus norvegicus (Rat), this protein is Lysine-specific demethylase 3A (Kdm3a).